We begin with the raw amino-acid sequence, 758 residues long: MTILNHTLGFPRVGLKRELKKAQESYWAGNSTQEELLNVGRELRARHWQQQQQAGVDLVPVGDFAWYDHVLTTSLLLGNVPERHQNADGSIDIDTLFRIGRGRAPTGKPAAAAEMTKWFNTNYHYMVPEFQQGQQFKLGWTQLLDEVDEALALGHKIKPVLLGPITYLWLGKVKGEQFDRLSLLNDILPVYQQVLAELAKRGIEWVQIDEPALVLELPQEWLDAYQPAYQALQGQVKLLLTTYFDSIGHNIDTIRALPVQGLHVDVVTGHDDLAVLNKNLPKEWLLSLGVINGRNVWRADLSSWFERLQPLVNSRPLWLGSSCSLLHSPIDLNEETRLDAEVKSWFAFALQKCAELALLTQALNAPNDAKLAELAAYSAPIRARRSSSRVHNAQVEQRLAAITSQDIERQLPYEARAETQRKRFNLPAWPTTTIGSFPQTTEIRGLRLDFKQGRLDGKNYRTGISEHIKHAIAEQERLGLDVLVHGEAERNDMVEYFGEHLDGFVFTQNGWVQSYGSRCVKPPVIIGDISRPEAITVEWAKYAQSLTEKPVKGMLTGPVTILCWSFPREDVSRETIAKQIALALRDEVEDLEKAGIGIIQIDEPALREGLPLRRADWQAYLQWAVDAFKLNAAVAQNDTQIHTHMCYCEFNDIMDSIAALDADVITIETSRSDMELLESFEDFAYPNEIGPGVYDIHSPNVPSVEWIEALLRKAAQRIPAERLWVNPDCGLKTRGWPETRQALANMVLAAQRLREEQV.

5-methyltetrahydropteroyltri-L-glutamate contacts are provided by residues 17–20 and Lys117; that span reads RELK. L-homocysteine is bound by residues 434–436 and Glu487; that span reads IGS. L-methionine is bound by residues 434-436 and Glu487; that span reads IGS. 5-methyltetrahydropteroyltri-L-glutamate contacts are provided by residues 518 to 519 and Trp564; that span reads RC. An L-homocysteine-binding site is contributed by Asp602. Position 602 (Asp602) interacts with L-methionine. 5-methyltetrahydropteroyltri-L-glutamate is bound at residue Glu608. Residues His644, Cys646, and Glu668 each coordinate Zn(2+). Residue His697 is the Proton donor of the active site. A Zn(2+)-binding site is contributed by Cys729.

The protein belongs to the vitamin-B12 independent methionine synthase family. Zn(2+) is required as a cofactor.

It carries out the reaction 5-methyltetrahydropteroyltri-L-glutamate + L-homocysteine = tetrahydropteroyltri-L-glutamate + L-methionine. The protein operates within amino-acid biosynthesis; L-methionine biosynthesis via de novo pathway; L-methionine from L-homocysteine (MetE route): step 1/1. In terms of biological role, catalyzes the transfer of a methyl group from 5-methyltetrahydrofolate to homocysteine resulting in methionine formation. In Yersinia pestis bv. Antiqua (strain Antiqua), this protein is 5-methyltetrahydropteroyltriglutamate--homocysteine methyltransferase.